Reading from the N-terminus, the 156-residue chain is Small ribosomal subunit protein uS7 (156 aa).

This sequence belongs to the universal ribosomal protein uS7 family. In terms of assembly, part of the 30S ribosomal subunit. Contacts proteins S9 and S11.

One of the primary rRNA binding proteins, it binds directly to 16S rRNA where it nucleates assembly of the head domain of the 30S subunit. Is located at the subunit interface close to the decoding center, probably blocks exit of the E-site tRNA. The polypeptide is Small ribosomal subunit protein uS7 (Campylobacter fetus subsp. fetus (strain 82-40)).